A 31-amino-acid polypeptide reads, in one-letter code: Dermaseptin-DI3 (31 aa).

The protein belongs to the frog skin active peptide (FSAP) family. Dermaseptin subfamily. In terms of tissue distribution, expressed by the skin glands.

The protein localises to the secreted. Functionally, antibacterial activity against Gram-positive bacteria S.aureus and E.faecalis, and Gram-negative bacteria P.aeruginosa and E.coli. The polypeptide is Dermaseptin-DI3 (Phyllomedusa distincta (Monkey frog)).